Here is a 467-residue protein sequence, read N- to C-terminus: Squalene synthase (467 aa).

The protein belongs to the phytoene/squalene synthase family. Mg(2+) serves as cofactor.

The catalysed reaction is 2 (2E,6E)-farnesyl diphosphate + NADPH + H(+) = squalene + 2 diphosphate + NADP(+). It catalyses the reaction 2 (2E,6E)-farnesyl diphosphate + NADH + H(+) = squalene + 2 diphosphate + NAD(+). It participates in terpene metabolism; lanosterol biosynthesis; lanosterol from farnesyl diphosphate: step 1/3. Its function is as follows. Squalene synthase; part of the third module of ergosterol biosynthesis pathway that includes the late steps of the pathway. The third module or late pathway involves the ergosterol synthesis itself through consecutive reactions that mainly occur in the endoplasmic reticulum (ER) membrane. Firstly, the squalene synthase SQS catalyzes the condensation of 2 farnesyl pyrophosphate moieties to form squalene, which is the precursor of all steroids. Secondly, the squalene epoxidase catalyzes the stereospecific oxidation of squalene to (S)-2,3-epoxysqualene, which is considered to be a rate-limiting enzyme in steroid biosynthesis. Then, the lanosterol synthase LS catalyzes the cyclization of (S)-2,3 oxidosqualene to lanosterol, a reaction that forms the sterol core. In the next steps, lanosterol is transformed to ergosterol via a complex process involving various demethylation, reduction and desaturation reactions. Lanosterol is also an intermediate in the biosynthesis of triterpenes such as ganoderic acids (GA), a group of highly oxygenated lanostane-type triterpenoids which are well recognized as a main group of unique bioactive compounds in the medicinal mushroom Ganoderma lucidum. The sequence is that of Squalene synthase from Ganoderma lucidum (Ling zhi medicinal fungus).